The sequence spans 351 residues: L-threonine 3-dehydrogenase (351 aa).

Position 39 (Cys-39) interacts with Zn(2+). Residues Thr-41 and His-44 each act as charge relay system in the active site. Zn(2+)-binding residues include His-64, Glu-65, Cys-94, Cys-97, Cys-100, and Cys-108. Residues Ile-176, Asp-196, Arg-201, 271–273 (LGI), and 295–296 (IY) contribute to the NAD(+) site.

Belongs to the zinc-containing alcohol dehydrogenase family. As to quaternary structure, homotetramer. Zn(2+) serves as cofactor.

It is found in the cytoplasm. It catalyses the reaction L-threonine + NAD(+) = (2S)-2-amino-3-oxobutanoate + NADH + H(+). Its pathway is amino-acid degradation; L-threonine degradation via oxydo-reductase pathway; glycine from L-threonine: step 1/2. Its function is as follows. Catalyzes the NAD(+)-dependent oxidation of L-threonine to 2-amino-3-ketobutyrate. The sequence is that of L-threonine 3-dehydrogenase from Francisella tularensis subsp. mediasiatica (strain FSC147).